The following is a 157-amino-acid chain: Small ribosomal subunit protein uS7 (157 aa).

The protein belongs to the universal ribosomal protein uS7 family. As to quaternary structure, part of the 30S ribosomal subunit. Contacts proteins S9 and S11.

Its function is as follows. One of the primary rRNA binding proteins, it binds directly to 16S rRNA where it nucleates assembly of the head domain of the 30S subunit. Is located at the subunit interface close to the decoding center, probably blocks exit of the E-site tRNA. This Delftia acidovorans (strain DSM 14801 / SPH-1) protein is Small ribosomal subunit protein uS7.